A 703-amino-acid polypeptide reads, in one-letter code: Polyribonucleotide nucleotidyltransferase (703 aa).

Mg(2+) is bound by residues aspartate 484 and aspartate 490. The 60-residue stretch at 551–610 (PTVTTLRVLPEKISVIIGPAGKNIKKIIEETGVKIDLDPTGLVKIYATSKIAAEKAIDMI) folds into the KH domain. The S1 motif domain occupies 620-688 (GEVYLGKVTR…DQGRIKVSLK (69 aa)).

It belongs to the polyribonucleotide nucleotidyltransferase family. Mg(2+) serves as cofactor.

It is found in the cytoplasm. It catalyses the reaction RNA(n+1) + phosphate = RNA(n) + a ribonucleoside 5'-diphosphate. Its function is as follows. Involved in mRNA degradation. Catalyzes the phosphorolysis of single-stranded polyribonucleotides processively in the 3'- to 5'-direction. The protein is Polyribonucleotide nucleotidyltransferase of Sulfurihydrogenibium sp. (strain YO3AOP1).